The primary structure comprises 1005 residues: Defense-associated sirtuin 2 (1005 aa).

The interval 1–295 is SIR2; it reads MVKVDLESKR…YSAVMDLLIE (295 aa). Positions 56–111 are inter-dimer interaction; the sequence is YPQWWRLVDKYHEELYGSPKKGNYSSDEYLRIPQIFYNVKGEMAFDGILKDFFQVD. Active-site residues include Y134, D135, and H171. Residues 296–548 form an MID region; that stretch reads SQENKFITKD…YKILEFLSDN (253 aa). Positions 549–1005 are CTD; the sequence is QFLYDDTVKL…YLEILMNYFI (457 aa).

In terms of assembly, homotetramer (dimer of dimers). Homodimer. The SIR2 domains are arranged in a central core, adopting a head-to-head arrangement, while the CTDs are positioned at the periphery of the complex. Tetramerization is necessary for the activation of NADase activity. The NADase enzymatic activity of this homotetrameric form is autoinhibited. The activated form of DSR2 (after binding to the phage tube protein) exists as tetramers and dimers, with the tetramers exhibiting more NADase activity. Each tetramer binds 4 NAD(+) molecules. (Microbial infection) Interacts (via C-terminus) with phage SPR tail tube monomer protein (via N-terminus) in a 4:4 DSR2-Tube assembly; this interaction induces a conformation change of the tube protein and activates the NADase activity of DSR2. As to quaternary structure, (Microbial infection) Interacts (via C-terminus) with phage SPbeta DSAD1 in a 4:2 ratio; this interaction prevents activation of the NADase defense activity of DSR2.

It catalyses the reaction NAD(+) + H2O = ADP-D-ribose + nicotinamide + H(+). With respect to regulation, (Microbial infection) NADase activity is activated through the binding of SPR phage tail tube monomer protein. NADase activity is inhibited through the binding to the phage SPbeta DSR anti-defense 1 (DSAD1). Anti-phage defense protein that is activated through the binding to the phage tail tube protein monomer and which hydrolyzes NAD+ upon activation (NADase activity). The resulting depletion of NAD(+) leads to an abortive infection. This Bacillus subtilis protein is Defense-associated sirtuin 2.